We begin with the raw amino-acid sequence, 115 residues long: Thioredoxin-1 (115 aa).

A Thioredoxin domain is found at 2–114 (LKRCNFKNQV…RQKVLEHVSA (113 aa)). Residues Cys39 and Cys42 each act as nucleophile in the active site. A disulfide bond links Cys39 and Cys42.

The protein belongs to the thioredoxin family. Expressed in ASJ and ASI ciliated sensory neurons. Expressed in the intestine (at protein level).

Participates in various redox reactions through the reversible oxidation of its active center dithiol to a disulfide and catalyzes dithiol-disulfide exchange reactions. Shown to facilitate the reduction of insulin disulfide bonds. Might play a role in the reversible nitrosylation of cysteine residues in target proteins, and thereby contributing to the response to intracellular nitric oxide. Shapes the ASJ sensory neuron biphasic response to nitric oxide (NO) exposure; trans-nitrosylation activity might inhibit calcium flux to the cytoplasm in ASJ neurons when exposed to a NO stimulus, whereas de-nitrosylation activity might promote calcium flux when NO is diminished. By regulating the NO-induced ASJ sensory neuron activity, mediates the avoidance response to NO-producing organisms like P.aeruginosa. Positively regulates life span extension under normal and caloric restriction conditions, dauer formation and the oxidative stress response. Contributes to the down-regulation of expression of the insulin-like neuropeptide daf-28 in the ASJ neurons in a redox-independent fashion, thereby promoting dauer formation. Negatively regulates the nuclear localization of the intestinal skn-1 transcription factor in a p38 MAPK pathway-dependent and redox-independent fashion. The polypeptide is Thioredoxin-1 (trx-1) (Caenorhabditis elegans).